A 505-amino-acid chain; its full sequence is Deoxyguanosinetriphosphate triphosphohydrolase (505 aa).

Positions 66 to 273 (RLTHSMEVQQ…MEAADDISYC (208 aa)) constitute an HD domain.

The protein belongs to the dGTPase family. Type 1 subfamily. As to quaternary structure, homotetramer. The cofactor is Mg(2+).

It catalyses the reaction dGTP + H2O = 2'-deoxyguanosine + triphosphate + H(+). Functionally, dGTPase preferentially hydrolyzes dGTP over the other canonical NTPs. In Escherichia coli (strain K12 / MC4100 / BW2952), this protein is Deoxyguanosinetriphosphate triphosphohydrolase.